The primary structure comprises 306 residues: MSLPDDSRYLKGGPVAQRIIAAVREDAAIAKAEGFPPKLISITVGDTDAVDVYVRNQRAKAQLAGIDFEERRFPATITSGELEAAIHGLNADPRVTGIIIQRPVPAHISVKTLQAAVHPLKDVEGMHPASIGNIVYNQLDLAPCTAAASVELLKETGLDLKGLEVVVVGHSEIVGKPIAFLLMSEGATVTVCHHLTRSVAAHARRADALFVAVGKPRLIKADMVKPGAAVIDIGINSEIGPDGTSRIVGDVDTDSVKDVASWITPVPGGVGPITVAILLRNTMVALSRQRALYEATYGTADRLAAE.

NADP(+)-binding positions include 169 to 171 (GHS) and isoleucine 235.

The protein belongs to the tetrahydrofolate dehydrogenase/cyclohydrolase family. As to quaternary structure, homodimer.

It carries out the reaction (6R)-5,10-methylene-5,6,7,8-tetrahydrofolate + NADP(+) = (6R)-5,10-methenyltetrahydrofolate + NADPH. It catalyses the reaction (6R)-5,10-methenyltetrahydrofolate + H2O = (6R)-10-formyltetrahydrofolate + H(+). The protein operates within one-carbon metabolism; tetrahydrofolate interconversion. Its function is as follows. Catalyzes the oxidation of 5,10-methylenetetrahydrofolate to 5,10-methenyltetrahydrofolate and then the hydrolysis of 5,10-methenyltetrahydrofolate to 10-formyltetrahydrofolate. In Mesorhizobium japonicum (strain LMG 29417 / CECT 9101 / MAFF 303099) (Mesorhizobium loti (strain MAFF 303099)), this protein is Bifunctional protein FolD 2.